The primary structure comprises 172 residues: Adenine phosphoribosyltransferase (172 aa).

Belongs to the purine/pyrimidine phosphoribosyltransferase family. Homodimer.

The protein resides in the cytoplasm. It carries out the reaction AMP + diphosphate = 5-phospho-alpha-D-ribose 1-diphosphate + adenine. It participates in purine metabolism; AMP biosynthesis via salvage pathway; AMP from adenine: step 1/1. Catalyzes a salvage reaction resulting in the formation of AMP, that is energically less costly than de novo synthesis. In Clostridium beijerinckii (strain ATCC 51743 / NCIMB 8052) (Clostridium acetobutylicum), this protein is Adenine phosphoribosyltransferase.